Consider the following 360-residue polypeptide: Lipid-A-disaccharide synthase (360 aa).

This sequence belongs to the LpxB family.

It carries out the reaction a lipid X + a UDP-2-N,3-O-bis[(3R)-3-hydroxyacyl]-alpha-D-glucosamine = a lipid A disaccharide + UDP + H(+). It functions in the pathway bacterial outer membrane biogenesis; LPS lipid A biosynthesis. In terms of biological role, condensation of UDP-2,3-diacylglucosamine and 2,3-diacylglucosamine-1-phosphate to form lipid A disaccharide, a precursor of lipid A, a phosphorylated glycolipid that anchors the lipopolysaccharide to the outer membrane of the cell. This Helicobacter pylori (strain G27) protein is Lipid-A-disaccharide synthase.